We begin with the raw amino-acid sequence, 166 residues long: Urease accessory protein UreE (166 aa).

The interval 132-156 (FQPEHGAYGGGHHHSRHGDEDFNYP) is disordered.

This sequence belongs to the UreE family.

The protein resides in the cytoplasm. Involved in urease metallocenter assembly. Binds nickel. Probably functions as a nickel donor during metallocenter assembly. This is Urease accessory protein UreE from Pseudomonas fluorescens (strain ATCC BAA-477 / NRRL B-23932 / Pf-5).